Here is a 399-residue protein sequence, read N- to C-terminus: Subtilisin-like protease 4 (399 aa).

Positions 1–19 (MVCLKTLSVFLAAFAAADA) are cleaved as a signal peptide. Residues 20-118 (RAVFKTQGHK…VEQDQVVRIS (99 aa)) constitute a propeptide that is removed on maturation. Residues 38–117 (YIVVMKDGVS…YVEQDQVVRI (80 aa)) enclose the Inhibitor I9 domain. The 272-residue stretch at 128-399 (SWGLGRVSHR…NRLLYNGSGQ (272 aa)) folds into the Peptidase S8 domain. Residues Asp-160 and His-191 each act as charge relay system in the active site. Asn-252 and Asn-308 each carry an N-linked (GlcNAc...) asparagine glycan. The active-site Charge relay system is Ser-346. Residue Asn-395 is glycosylated (N-linked (GlcNAc...) asparagine).

The protein belongs to the peptidase S8 family.

The protein localises to the secreted. Its function is as follows. Secreted subtilisin-like serine protease with keratinolytic activity that contributes to pathogenicity. This is Subtilisin-like protease 4 (SUB4) from Arthroderma benhamiae (strain ATCC MYA-4681 / CBS 112371) (Trichophyton mentagrophytes).